A 391-amino-acid chain; its full sequence is Arginine biosynthesis bifunctional protein ArgJ 2 (391 aa).

Substrate-binding residues include lysine 167 and serine 180. The active-site Nucleophile is serine 180.

This sequence belongs to the ArgJ family. Heterotetramer of two alpha and two beta chains.

It localises to the cytoplasm. It carries out the reaction N(2)-acetyl-L-ornithine + L-glutamate = N-acetyl-L-glutamate + L-ornithine. The enzyme catalyses L-glutamate + acetyl-CoA = N-acetyl-L-glutamate + CoA + H(+). It functions in the pathway amino-acid biosynthesis; L-arginine biosynthesis; L-ornithine and N-acetyl-L-glutamate from L-glutamate and N(2)-acetyl-L-ornithine (cyclic): step 1/1. It participates in amino-acid biosynthesis; L-arginine biosynthesis; N(2)-acetyl-L-ornithine from L-glutamate: step 1/4. Functionally, catalyzes two activities which are involved in the cyclic version of arginine biosynthesis: the synthesis of N-acetylglutamate from glutamate and acetyl-CoA as the acetyl donor, and of ornithine by transacetylation between N(2)-acetylornithine and glutamate. The protein is Arginine biosynthesis bifunctional protein ArgJ 2 of Streptomyces clavuligerus.